The chain runs to 203 residues: Cardiotrophin-2 (203 aa).

Positions 1–21 (MSCSLARLCLLTLLSPPLSSA) are cleaved as a signal peptide. The N-linked (GlcNAc...) asparagine glycan is linked to N43.

The protein belongs to the IL-6 superfamily.

It localises to the secreted. May have an important role in neuronal precursor development and maturation. The protein is Cardiotrophin-2 (CTF2) of Pan troglodytes (Chimpanzee).